Consider the following 303-residue polypeptide: Sulfate adenylyltransferase subunit 2 (303 aa).

The segment at 281–303 (RQGRVIDHDSSGSMEKKKQEGYF) is disordered.

It belongs to the PAPS reductase family. CysD subfamily. As to quaternary structure, heterodimer composed of CysD, the smaller subunit, and CysN.

It carries out the reaction sulfate + ATP + H(+) = adenosine 5'-phosphosulfate + diphosphate. It functions in the pathway sulfur metabolism; hydrogen sulfide biosynthesis; sulfite from sulfate: step 1/3. Its function is as follows. With CysN forms the ATP sulfurylase (ATPS) that catalyzes the adenylation of sulfate producing adenosine 5'-phosphosulfate (APS) and diphosphate, the first enzymatic step in sulfur assimilation pathway. APS synthesis involves the formation of a high-energy phosphoric-sulfuric acid anhydride bond driven by GTP hydrolysis by CysN coupled to ATP hydrolysis by CysD. The chain is Sulfate adenylyltransferase subunit 2 from Saccharophagus degradans (strain 2-40 / ATCC 43961 / DSM 17024).